A 275-amino-acid polypeptide reads, in one-letter code: Integrase homolog (275 aa).

Positions 88 to 111 (RVSQDRQAQGRERRSVLLPQERRG) are enriched in basic and acidic residues. The tract at residues 88-120 (RVSQDRQAQGRERRSVLLPQERRGSSGRQPLYS) is disordered.

Belongs to the 'phage' integrase family.

Functionally, integrase-recombinase proteins are responsible for catalyzing strand exchange between DNA molecules and play an important role in the DNA replication. Its function is as follows. May be required for the formation of concatameric complex replicative intermediates and/or their resolution before encapsidation. The protein is Integrase homolog (INT) of Dryophytes versicolor (chameleon treefrog).